A 424-amino-acid polypeptide reads, in one-letter code: UPF0229 protein PFL_5654 (424 aa).

The tract at residues glycine 85–glycine 108 is disordered. Over residues glutamine 92 to glycine 108 the composition is skewed to gly residues.

This sequence belongs to the UPF0229 family.

This Pseudomonas fluorescens (strain ATCC BAA-477 / NRRL B-23932 / Pf-5) protein is UPF0229 protein PFL_5654.